A 108-amino-acid chain; its full sequence is Zinc finger protein 475 (108 aa).

2 C2HC/C3H-type zinc fingers span residues 6–35 (PAVV…KWHN) and 79–108 (QLVP…KAAK). Positions 10, 13, 25, 29, 83, 86, 98, and 102 each coordinate Zn(2+).

It depends on Zn(2+) as a cofactor.

The chain is Zinc finger protein 475 from Homo sapiens (Human).